A 419-amino-acid polypeptide reads, in one-letter code: Serine hydroxymethyltransferase (419 aa).

(6S)-5,6,7,8-tetrahydrofolate-binding positions include leucine 122 and 126-128 (GHL). Residue lysine 231 is modified to N6-(pyridoxal phosphate)lysine. 354–356 (SPF) serves as a coordination point for (6S)-5,6,7,8-tetrahydrofolate.

Belongs to the SHMT family. As to quaternary structure, homodimer. Pyridoxal 5'-phosphate is required as a cofactor.

It is found in the cytoplasm. It carries out the reaction (6R)-5,10-methylene-5,6,7,8-tetrahydrofolate + glycine + H2O = (6S)-5,6,7,8-tetrahydrofolate + L-serine. Its pathway is one-carbon metabolism; tetrahydrofolate interconversion. It functions in the pathway amino-acid biosynthesis; glycine biosynthesis; glycine from L-serine: step 1/1. In terms of biological role, catalyzes the reversible interconversion of serine and glycine with tetrahydrofolate (THF) serving as the one-carbon carrier. This reaction serves as the major source of one-carbon groups required for the biosynthesis of purines, thymidylate, methionine, and other important biomolecules. Also exhibits THF-independent aldolase activity toward beta-hydroxyamino acids, producing glycine and aldehydes, via a retro-aldol mechanism. This is Serine hydroxymethyltransferase from Exiguobacterium sibiricum (strain DSM 17290 / CCUG 55495 / CIP 109462 / JCM 13490 / 255-15).